A 1103-amino-acid chain; its full sequence is Retinal guanylyl cyclase 1 (1103 aa).

The signal sequence occupies residues 1-51; sequence MTACARRAGGLPDPGLCGPAWWAPSLPRLPRALPRLPLLLLLLLLQPPALS. Over 52–462 the chain is Extracellular; sequence AVFTVGVLGP…PNNICGGGLE (411 aa). N-linked (GlcNAc...) asparagine glycosylation is present at asparagine 297. Residues 463-487 traverse the membrane as a helical segment; the sequence is PGLVFLGFLLVVGMGLAGAFLAHYV. The Cytoplasmic segment spans residues 488–1103; it reads RHRLLHMQMV…LEKARPGQFS (616 aa). The 284-residue stretch at 525–808 folds into the Protein kinase domain; that stretch reads QGSRSSLGAR…DHTFDLFKNI (284 aa). Positions 880–1010 constitute a Guanylate cyclase domain; the sequence is TLYFSDIVGF…DTVNTASRME (131 aa). Residues 1065–1103 form a disordered region; the sequence is PIPKPPDLQPGSSNHGISLQEIPPERRRKLEKARPGQFS.

It belongs to the adenylyl cyclase class-4/guanylyl cyclase family. Homodimer; requires homodimerization for guanylyl cyclase activity. Interacts with RD3; promotes the exit of GUCY2D from the endoplasmic reticulum and its trafficking to the photoreceptor outer segments. Interaction with RD3 negatively regulates guanylate cyclase activity. Retina.

It localises to the photoreceptor outer segment membrane. The protein localises to the endoplasmic reticulum membrane. It catalyses the reaction GTP = 3',5'-cyclic GMP + diphosphate. With respect to regulation, activated by GUCA1A when free calcium ions concentration is low, and inhibited by GUCA1A when free calcium ions concentration is high. Negatively regulated by RD3; inhibits the basal and GUCA1A-stimulated guanylate cyclase activity. Functionally, catalyzes the synthesis of cyclic GMP (cGMP) in rods and cones of photoreceptors. Plays an essential role in phototransduction, by mediating cGMP replenishment. May also participate in the trafficking of membrane-asociated proteins to the photoreceptor outer segment membrane. The polypeptide is Retinal guanylyl cyclase 1 (GUCY2D) (Homo sapiens (Human)).